Consider the following 90-residue polypeptide: Acylphosphatase (90 aa).

The 86-residue stretch at 5–90 (CEKFVVSGIV…CREYQGFEIL (86 aa)) folds into the Acylphosphatase-like domain. Residues arginine 20 and asparagine 38 contribute to the active site.

It belongs to the acylphosphatase family.

The enzyme catalyses an acyl phosphate + H2O = a carboxylate + phosphate + H(+). This chain is Acylphosphatase (acyP), found in Vibrio vulnificus (strain CMCP6).